A 146-amino-acid chain; its full sequence is Probable glycine cleavage system H protein 1, mitochondrial (146 aa).

Residues 1 to 30 (MLKTLRFGTRAFGQNLNIAKRNFCTRYTND) constitute a mitochondrion transit peptide. In terms of domain architecture, Lipoyl-binding spans 41-123 (NYRLGITDFA…MGDGWIVEYK (83 aa)). Lys82 is modified (N6-lipoyllysine).

Belongs to the GcvH family. In terms of assembly, the glycine cleavage system is composed of four proteins: P, T, L and H. Requires (R)-lipoate as cofactor.

The protein resides in the mitochondrion. Its function is as follows. The glycine cleavage system catalyzes the degradation of glycine. The H protein shuttles the methylamine group of glycine from the P protein to the T protein. The polypeptide is Probable glycine cleavage system H protein 1, mitochondrial (gcvH1) (Dictyostelium discoideum (Social amoeba)).